We begin with the raw amino-acid sequence, 241 residues long: Adapter protein MecA (241 aa).

The segment at lysine 77 to valine 102 is disordered. The span at aspartate 80–glutamine 89 shows a compositional bias: acidic residues.

Belongs to the MecA family. In terms of assembly, homodimer.

Functionally, enables the recognition and targeting of unfolded and aggregated proteins to the ClpC protease or to other proteins involved in proteolysis. This Levilactobacillus brevis (strain ATCC 367 / BCRC 12310 / CIP 105137 / JCM 1170 / LMG 11437 / NCIMB 947 / NCTC 947) (Lactobacillus brevis) protein is Adapter protein MecA.